A 442-amino-acid polypeptide reads, in one-letter code: Exodeoxyribonuclease 7 large subunit (442 aa).

Belongs to the XseA family. In terms of assembly, heterooligomer composed of large and small subunits.

The protein localises to the cytoplasm. The catalysed reaction is Exonucleolytic cleavage in either 5'- to 3'- or 3'- to 5'-direction to yield nucleoside 5'-phosphates.. Functionally, bidirectionally degrades single-stranded DNA into large acid-insoluble oligonucleotides, which are then degraded further into small acid-soluble oligonucleotides. This is Exodeoxyribonuclease 7 large subunit from Rickettsia bellii (strain OSU 85-389).